The primary structure comprises 136 residues: Large ribosomal subunit protein uL16 (136 aa).

It belongs to the universal ribosomal protein uL16 family. As to quaternary structure, part of the 50S ribosomal subunit.

Its function is as follows. Binds 23S rRNA and is also seen to make contacts with the A and possibly P site tRNAs. The protein is Large ribosomal subunit protein uL16 of Pelagibacter ubique (strain HTCC1062).